Here is a 311-residue protein sequence, read N- to C-terminus: Putative mitochondrial transporter UCP3 (311 aa).

Residues 1 to 10 (MVGLKPSEVP) are Mitochondrial intermembrane-facing. The helical transmembrane segment at 11–32 (PTTAVKFLGAGTAACFADLLTF) threads the bilayer. Solcar repeat units follow at residues 11 to 105 (PTTA…VKQF), 114 to 205 (SSIT…IKEK), and 214 to 299 (DNFP…LKRA). The Mitochondrial matrix segment spans residues 33 to 76 (PLDTAKVRLQIQGENQATQAARRIQYRGVLGTILTMVRTEGPRS). A helical transmembrane segment spans residues 77–99 (PYNGLVAGLQRQMSFASIRIGLY). Residues 100–119 (DSVKQFYTPKGSDHSSITTR) are Mitochondrial intermembrane-facing. Residues 120-136 (ILAGCTTGAMAVSCAQP) form a helical membrane-spanning segment. At 137–182 (TDVVKVRFQASIHLGAGSNRKYSGTMDAYRTIAREEGVRGLWKGTL) the chain is on the mitochondrial matrix side. Residues 183–199 (PNITRNAIVNCAEMVTY) form a helical membrane-spanning segment. Residues 200-216 (DIIKEKLLDYHLLTDNF) lie on the Mitochondrial intermembrane side of the membrane. The chain crosses the membrane as a helical span at residues 217-236 (PCHLISAFGAGFCATVVASP). The Mitochondrial matrix portion of the chain corresponds to 237–270 (VDVVKTRYMNSPPGQYCSPLDCMLKMVTQEGPTA). The helical transmembrane segment at 271-293 (FYKGFTPSFLRLGTWNVVMFVTY) threads the bilayer. The segment at 278–300 (SFLRLGTWNVVMFVTYEQLKRAL) is purine nucleotide binding. Topologically, residues 294-311 (EQLKRALMKVQMLRESPF) are mitochondrial intermembrane.

This sequence belongs to the mitochondrial carrier (TC 2.A.29) family. Interacts with HAX1; the interaction is direct and calcium-dependent.

It localises to the mitochondrion inner membrane. Its function is as follows. Putative transmembrane transporter that plays a role in mitochondrial metabolism via an as yet unclear mechanism. Originally, this mitochondrial protein was thought to act as a proton transmembrane transporter from the mitochondrial intermembrane space into the matrix, causing proton leaks through the inner mitochondrial membrane, thereby uncoupling mitochondrial membrane potential generation from ATP synthesis. However, this function is controversial and uncoupling may not be the function, or at least not the main function, but rather a consequence of more conventional metabolite transporter activity. This chain is Putative mitochondrial transporter UCP3, found in Canis lupus familiaris (Dog).